We begin with the raw amino-acid sequence, 514 residues long: MDMSIRQALLKNFMGNSPDWYKLAIITFLIINPLIFFFVDPFIAGWLLVVEFIFTLAMALKCYPLQPGGLLAIEAVIIGMTTPKQIGHEIANNLEVILLLVFMVAGIYFMKQLLLFAFTKLLLSIRSKRLLSLAFCFASAFLSAFLDALTVIAVVISVSLGFYSIYHNFASNQADAELSNDGFIDSTEKKQTLEQFRAFLRSLMMHAGVGTALGGVMTMVGEPQNLIIAKHLEWDFVTFFIRMSPVTIPVFFAGLAVCYLVERFKLFGYGAELPELVRKVLTDYDKKNSEKRTQQEKAQLLIQALIGIWLIVALALHLAEVGIIGLSVIILATTFCGITEEHALGKAFEEALPFTALLTVFFSVVAVIIDQQLFGPIIQFVLQASESSQLSLFYLFNGLLSAISDNVFVGTVYISEALSALQEGLISQSQYEHIGVAINTGTNLPSVATPNGQAAFLFLLTSALSPLIRLSYGRMVMMALPYTIVMTLLGLLAVEFWLVPMTHWLYEIGLIAIP.

A run of 11 helical transmembrane segments spans residues 13-33, 34-54, 96-116, 136-156, 203-223, 236-256, 304-324, 349-369, 392-412, 448-468, and 479-499; these read FMGN…IINP, LIFF…EFIF, VILL…LLLF, CFAS…AVVI, LMMH…VGEP, FVTF…AGLA, ALIG…VGII, EEAL…AVII, LFYL…VGTV, ATPN…SPLI, and ALPY…FWLV.

Belongs to the NhaB Na(+)/H(+) (TC 2.A.34) antiporter family.

The protein localises to the cell inner membrane. It carries out the reaction 2 Na(+)(in) + 3 H(+)(out) = 2 Na(+)(out) + 3 H(+)(in). In terms of biological role, na(+)/H(+) antiporter that extrudes sodium in exchange for external protons. The sequence is that of Na(+)/H(+) antiporter NhaB from Proteus mirabilis (strain HI4320).